The primary structure comprises 522 residues: Maturase K (522 aa).

This sequence belongs to the intron maturase 2 family. MatK subfamily.

It is found in the plastid. The protein resides in the chloroplast. Functionally, usually encoded in the trnK tRNA gene intron. Probably assists in splicing its own and other chloroplast group II introns. The chain is Maturase K from Iris domestica (Leopard lily).